The primary structure comprises 105 residues: Large ribosomal subunit protein uL24 (105 aa).

Belongs to the universal ribosomal protein uL24 family. In terms of assembly, part of the 50S ribosomal subunit.

Its function is as follows. One of two assembly initiator proteins, it binds directly to the 5'-end of the 23S rRNA, where it nucleates assembly of the 50S subunit. In terms of biological role, one of the proteins that surrounds the polypeptide exit tunnel on the outside of the subunit. This chain is Large ribosomal subunit protein uL24, found in Mycobacterium tuberculosis (strain CDC 1551 / Oshkosh).